Here is a 70-residue protein sequence, read N- to C-terminus: Exodeoxyribonuclease 7 small subunit (70 aa).

This sequence belongs to the XseB family. As to quaternary structure, heterooligomer composed of large and small subunits.

The protein resides in the cytoplasm. The enzyme catalyses Exonucleolytic cleavage in either 5'- to 3'- or 3'- to 5'-direction to yield nucleoside 5'-phosphates.. In terms of biological role, bidirectionally degrades single-stranded DNA into large acid-insoluble oligonucleotides, which are then degraded further into small acid-soluble oligonucleotides. The sequence is that of Exodeoxyribonuclease 7 small subunit from Magnetococcus marinus (strain ATCC BAA-1437 / JCM 17883 / MC-1).